Here is a 230-residue protein sequence, read N- to C-terminus: Protein RESPONSE TO ABA AND SALT 1 (230 aa).

The DOG1 domain occupies 7 to 230; the sequence is SQSFTIFVDG…RLRDRDQERA (224 aa).

Negative regulator of salt (NaCl) tolerance probably by enhancing abscisic acid (ABA) sensitivity. In Arabidopsis thaliana (Mouse-ear cress), this protein is Protein RESPONSE TO ABA AND SALT 1.